The chain runs to 91 residues: Non-specific lipid-transfer protein 1 (91 aa).

Cystine bridges form between Cys3/Cys50, Cys13/Cys27, Cys28/Cys73, and Cys48/Cys87.

This sequence belongs to the plant LTP family.

Plant non-specific lipid-transfer proteins transfer phospholipids as well as galactolipids across membranes. May play a role in wax or cutin deposition in the cell walls of expanding epidermal cells and certain secretory tissues. The chain is Non-specific lipid-transfer protein 1 from Prunus armeniaca (Apricot).